We begin with the raw amino-acid sequence, 486 residues long: Glutamate--tRNA ligase (486 aa).

The short motif at 11-21 (PSPTGLLHIGN) is the 'HIGH' region element. A 'KMSKS' region motif is present at residues 255–259 (KLSKR). Lys258 is a binding site for ATP.

It belongs to the class-I aminoacyl-tRNA synthetase family. Glutamate--tRNA ligase type 1 subfamily. Monomer.

The protein localises to the cytoplasm. It catalyses the reaction tRNA(Glu) + L-glutamate + ATP = L-glutamyl-tRNA(Glu) + AMP + diphosphate. Catalyzes the attachment of glutamate to tRNA(Glu) in a two-step reaction: glutamate is first activated by ATP to form Glu-AMP and then transferred to the acceptor end of tRNA(Glu). The chain is Glutamate--tRNA ligase from Streptococcus pneumoniae serotype 19F (strain G54).